A 342-amino-acid polypeptide reads, in one-letter code: Heat-inducible transcription repressor HrcA (342 aa).

The protein belongs to the HrcA family.

Functionally, negative regulator of class I heat shock genes (grpE-dnaK-dnaJ and groELS operons). Prevents heat-shock induction of these operons. The sequence is that of Heat-inducible transcription repressor HrcA from Methylibium petroleiphilum (strain ATCC BAA-1232 / LMG 22953 / PM1).